We begin with the raw amino-acid sequence, 192 residues long: Virion infectivity factor (192 aa).

Residues 14 to 17 (DRMR) are interaction with host APOBEC3F; F1-box. Residues 40–44 (YRHHY) form an interaction with host APOBEC3G; G-box region. Positions 54 to 72 (EVHIPLGEARLVVTTYWGL) are interaction with host APOBEC3F and APOBEC3G; FG-box. Residues 74–79 (TGEKEW) form an interaction with host APOBEC3F; F2-box region. The interval 75-114 (GEKEWHLGQGVSIEWRKRRYSTQVDPGLADQLIHMYYFDC) is RNA-binding. The residue at position 96 (T96) is a Phosphothreonine; by host MAP4K1. Zn(2+) is bound by residues H108, C114, C133, and H139. Residues 108 to 139 (HMYYFDCFAESAIRKAILGHIVSPSCEYQAGH) carry the HCCH motif motif. At S144 the chain carries Phosphoserine; by host. Residues 144–153 (SLQYLALAAL) carry the BC-box-like motif motif. Residues 151–164 (AALIAPKKIKPPLP) form a multimerization region. The tract at residues 151–180 (AALIAPKKIKPPLPSVRKLTEDRWNKPQKT) is SOCS box-like. A Phosphoserine; by host MAP4K1 modification is found at S165. The tract at residues 165–192 (SVRKLTEDRWNKPQKTKGRRGSHTMNGH) is disordered. The segment at 171–172 (ED) is membrane association. Basic residues predominate over residues 176-186 (KPQKTKGRRGS). T188 carries the phosphothreonine; by host modification.

The protein belongs to the primate lentivirus group Vif protein family. Homomultimer; in vitro and presumably in vivo. Interacts with viral RNA and Pr55Gag precursor; these interactions mediate Vif incorporation into the virion. Interacts with the viral reverse transcriptase. Forms cullin-5-RING E3 ubiquitin-protein ligase complex (ECS complex) by interacting with host CUL5, RBX2, elongin BC complex (ELOB and ELOC) and CBFB/CBF-beta. Within the ECS complex, Vif interacts directly with host CUL5, ELOC and APOBEC (APOBEC3F and APOBEC3G) substrates. The ECS complex also contains some single-stranded RNA (ssRNA) that acts as a glue that bridges Vif with APOBEC (APOBEC3F and APOBEC3G) substrates. Interacts with host UBCE7IP1 isoform 3/ZIN and possibly with SAT. Interacts with host tyrosine kinases HCK and FYN; these interactions may decrease level of phosphorylated APOBEC3G incorporation into virions. Interacts with host ABCE1; this interaction may play a role in protecting viral RNA from damage during viral assembly. Interacts with host MDM2; this interaction targets Vif for degradation by the proteasome. Post-translationally, processed in virion by the viral protease. In terms of processing, highly phosphorylated on serine and threonine residues. Polyubiquitinated and degraded by the proteasome in the presence of APOBEC3G.

The protein localises to the host cytoplasm. Its subcellular location is the host cell membrane. The protein resides in the virion. Its function is as follows. Counteracts the innate antiviral activity of host APOBEC3F and APOBEC3G by promoting their ubiquitination and degradation. Acts as a substrate recognition component of an E3 ubiquitin-protein ligase complex: mechanistically, Vif hijacks a host cullin-5-RING E3 ubiquitin-protein ligase complex (ECS complex) and the transcription coactivator CBFB/CBF-beta to form an active E3 ubiquitin-protein ligase complex that targets APOBEC3G and APOBEC3F for polyubiquitination, leading to their degradation by the proteasome. Vif interaction with APOBEC3G also blocks its cytidine deaminase activity in a proteasome-independent manner, suggesting a dual inhibitory mechanism. May interact directly with APOBEC3G mRNA in order to inhibit its translation. Association with CBFB/CBF-beta also inhibits the transcription coactivator activity of CBFB/CBF-beta. Seems to play a role in viral morphology by affecting the stability of the viral nucleoprotein core. Finally, Vif also contributes to the G2 cell cycle arrest observed in HIV infected cells. This chain is Virion infectivity factor, found in Human immunodeficiency virus type 1 group M subtype D (isolate NDK) (HIV-1).